A 1036-amino-acid polypeptide reads, in one-letter code: Ephrin type-A receptor 6 (1036 aa).

Positions 1-22 are cleaved as a signal peptide; it reads MGGCEVREFLLQFGFFLPLLTA. Over 23-550 the chain is Extracellular; it reads WPGDCSHVSN…MAAEQGQILV (528 aa). The Eph LBD domain occupies 34–212; the sequence is QVVLLDTTTV…FYKKCPFTVR (179 aa). Fibronectin type-III domains lie at 331–441 and 442–537; these read PPSA…TDQD and APSL…TGDE. N-linked (GlcNAc...) asparagine glycans are attached at residues Asn343, Asn397, and Asn410. Residues 551–571 traverse the membrane as a helical segment; that stretch reads IATAAVGGFTLLVILTLFFLI. Residues 572–1036 lie on the Cytoplasmic side of the membrane; the sequence is TGRCQWYIKA…MHIQEKGFHV (465 aa). Residues Tyr606 and Tyr612 each carry the phosphotyrosine; by autocatalysis modification. Residues 631–944 enclose the Protein kinase domain; sequence IRIERVIGAG…RNPSALHTLV (314 aa). Residues 637–645 and Lys663 each bind ATP; that span reads IGAGEFGEV. The Proton acceptor role is filled by Asp798. Phosphotyrosine; by autocatalysis occurs at positions 831 and 978. Positions 961-1025 constitute an SAM domain; the sequence is PLFVTVGDWL…VSSIQTLRLH (65 aa). Positions 1034-1036 match the PDZ-binding motif; sequence FHV.

This sequence belongs to the protein kinase superfamily. Tyr protein kinase family. Ephrin receptor subfamily. Heterotetramer upon binding of the ligand. The heterotetramer is composed of an ephrin dimer and a receptor dimer. Oligomerization is probably required to induce biological responses. Interacts (via SAM domain) with ANKS1A (via SAM domain). As to expression, expressed in brain and testis.

Its subcellular location is the membrane. It catalyses the reaction L-tyrosyl-[protein] + ATP = O-phospho-L-tyrosyl-[protein] + ADP + H(+). Functionally, receptor tyrosine kinase which binds promiscuously GPI-anchored ephrin-A family ligands residing on adjacent cells, leading to contact-dependent bidirectional signaling into neighboring cells. The signaling pathway downstream of the receptor is referred to as forward signaling while the signaling pathway downstream of the ephrin ligand is referred to as reverse signaling. This chain is Ephrin type-A receptor 6 (EPHA6), found in Homo sapiens (Human).